The sequence spans 323 residues: Solute carrier family 35 member B1 (323 aa).

A run of 8 helical transmembrane segments spans residues 15–35, 51–71, 85–105, 136–156, 169–189, 205–225, 253–273, and 286–306; these read LVCF…QETI, FALS…KLLI, WLYA…NSAL, YPLS…LFMY, TFGY…LTGV, MMLY…VFTG, LGQT…CSII, and VILF…LVFL. The Di-lysine motif signature appears at 319 to 323; it reads KKPSH.

The protein belongs to the nucleotide-sugar transporter family. SLC35B subfamily.

The protein localises to the endoplasmic reticulum membrane. In terms of biological role, probable sugar transporter. The protein is Solute carrier family 35 member B1 (slc35b1) of Xenopus tropicalis (Western clawed frog).